The following is a 398-amino-acid chain: Acetate kinase (398 aa).

Asn10 is a Mg(2+) binding site. Lys17 lines the ATP pocket. Substrate is bound at residue Arg91. The active-site Proton donor/acceptor is the Asp148. Residues 208 to 212 (HLGNG), 283 to 285 (DCR), and 331 to 335 (GIGEN) contribute to the ATP site. Glu385 serves as a coordination point for Mg(2+).

The protein belongs to the acetokinase family. As to quaternary structure, homodimer. Mg(2+) serves as cofactor. It depends on Mn(2+) as a cofactor.

Its subcellular location is the cytoplasm. The enzyme catalyses acetate + ATP = acetyl phosphate + ADP. It participates in metabolic intermediate biosynthesis; acetyl-CoA biosynthesis; acetyl-CoA from acetate: step 1/2. Catalyzes the formation of acetyl phosphate from acetate and ATP. Can also catalyze the reverse reaction. The sequence is that of Acetate kinase from Shewanella pealeana (strain ATCC 700345 / ANG-SQ1).